A 377-amino-acid polypeptide reads, in one-letter code: Signal peptide peptidase (377 aa).

The tract at residues 1-27 is disordered; sequence MDSALSDPHNGSAEAGGPTNSTTRPPS. The Lumenal portion of the chain corresponds to 1 to 31; the sequence is MDSALSDPHNGSAEAGGPTNSTTRPPSTPEG. 2 N-linked (GlcNAc...) asparagine glycosylation sites follow: Asn-10 and Asn-20. Residues 32-52 form a helical membrane-spanning segment; it reads IALAYGSLLLMALLPIFFGAL. At 53 to 77 the chain is on the cytoplasmic side; that stretch reads RSVRCARGKNASDMPETITSRDAAR. The chain crosses the membrane as a helical span at residues 78–98; sequence FPIIASCTLLGLYLFFKIFSQ. Topologically, residues 99–100 are lumenal; it reads EY. Residues 101 to 121 form a helical membrane-spanning segment; it reads INLLLSMYFFVLGILALSHTI. The Cytoplasmic portion of the chain corresponds to 122 to 157; sequence SPFMNKFFPASFPNRQYQLLFTQGSGENKEEIINYE. Residues 158–178 traverse the membrane as a helical segment; the sequence is FDTKDLVCLGLSSIVGVWYLL. Topologically, residues 179 to 181 are lumenal; sequence RKH. The helical transmembrane segment at 182–202 threads the bilayer; sequence WIANNLFGLAFSLNGVELLHL. Residues 203-209 are Cytoplasmic-facing; it reads NNVSTGC. Residues 210–230 traverse the membrane as a helical segment; sequence ILLGGLFIYDVFWVFGTNVMV. Asp-219 is an active-site residue. Topologically, residues 231–256 are lumenal; the sequence is TVAKSFEAPIKLVFPQDLLEKGLEAN. The helical transmembrane segment at 257 to 277 threads the bilayer; the sequence is NFAMLGLGDVVIPGIFIALLL. Residue Asp-265 is part of the active site. The Cytoplasmic portion of the chain corresponds to 278–290; it reads RFDISLKKNTHTY. Residues 291–311 traverse the membrane as a helical segment; the sequence is FYTSFAAYIFGLGLTIFIMHI. Residues 312–314 are Lumenal-facing; that stretch reads FKH. The helical transmembrane segment at 315 to 335 threads the bilayer; it reads AQPALLYLVPACIGFPVLVAL. The PAL signature appears at 317–319; sequence PAL. At 336 to 377 the chain is on the cytoplasmic side; it reads AKGEVTEMFSYEESNPKDPAAVTESKEGTEASASKGLEKKEK. The interval 345–377 is disordered; it reads SYEESNPKDPAAVTESKEGTEASASKGLEKKEK. Ser-367 is subject to Phosphoserine.

Belongs to the peptidase A22B family. Monomer. Homodimer. Interacts with RNF139. Interacts with DERL1 and XBP1 isoform 1. In terms of processing, N-glycosylated. Widely expressed with highest levels in kidney, liver, placenta, lung, leukocytes and small intestine and reduced expression in heart and skeletal muscle. Expressed abundantly in the CNS with highest levels in thalamus and medulla.

Its subcellular location is the endoplasmic reticulum membrane. It localises to the membrane. The protein localises to the cell membrane. Its function is as follows. Catalyzes intramembrane proteolysis of signal peptides that have been removed from precursors of secretory and membrane proteins, resulting in the release of the fragment from the ER membrane into the cytoplasm. Required to generate lymphocyte cell surface (HLA-E) epitopes derived from MHC class I signal peptides. May be necessary for the removal of the signal peptide that remains attached to the hepatitis C virus core protein after the initial proteolytic processing of the polyprotein. Involved in the intramembrane cleavage of the integral membrane protein PSEN1. Cleaves the integral membrane protein XBP1 isoform 1 in a DERL1/RNF139-dependent manner. May play a role in graft rejection. In Homo sapiens (Human), this protein is Signal peptide peptidase.